The following is a 199-amino-acid chain: Large ribosomal subunit protein bL17 (199 aa).

Residues 123 to 199 form a disordered region; the sequence is DEANRARRAA…EESEAKDDTK (77 aa). A compositionally biased stretch (basic and acidic residues) spans 137 to 152; it reads KADERADEKADEKAEE. Residues 153–199 are compositionally biased toward acidic residues; that stretch reads TVEETTEAPAEESTEAAAEETVEETTEAPAEESTEAAEESEAKDDTK.

The protein belongs to the bacterial ribosomal protein bL17 family. As to quaternary structure, part of the 50S ribosomal subunit. Contacts protein L32.

The sequence is that of Large ribosomal subunit protein bL17 from Mycolicibacterium smegmatis (strain ATCC 700084 / mc(2)155) (Mycobacterium smegmatis).